An 818-amino-acid chain; its full sequence is Actin filament-associated protein 1-like 2 (818 aa).

Tyr-56 bears the Phosphotyrosine mark. The disordered stretch occupies residues 66–163 (QNAESQGKAP…SKGKSAPYQW (98 aa)). The span at 85-94 (EPSQHSSAPQ) shows a compositional bias: polar residues. Residues 123 to 139 (YYEEAEPYDTSLNEDGE) show a composition bias toward acidic residues. PH domains lie at 175-271 (DARI…EVSG) and 353-447 (SLET…SESG). A Phosphoserine modification is found at Ser-408. Residue Tyr-413 is modified to Phosphotyrosine. Residue Ser-484 is modified to Phosphoserine. Residues 513–532 (AAVEPTEEATPVADDPNERE) form a disordered region. Residues 652 to 749 (AEIKLGKNRT…VKDNLKKAEA (98 aa)) are a coiled coil. Positions 765 to 787 (NVSPRPKAVTPASAPDCTPVNSA) are disordered.

Interacts with SRC. Interacts with LCK when tyrosine phosphorylated. In terms of processing, tyrosine phosphorylated (by SRC). In terms of tissue distribution, detected in spleen and thyroid, and at lower levels in kidney, brain, lung and pancreas.

The protein resides in the cytoplasm. In terms of biological role, may play a role in a signaling cascade by enhancing the kinase activity of SRC. Contributes to SRC-regulated transcription activation. This is Actin filament-associated protein 1-like 2 (AFAP1L2) from Homo sapiens (Human).